A 145-amino-acid polypeptide reads, in one-letter code: Large ribosomal subunit protein uL13 (145 aa).

This sequence belongs to the universal ribosomal protein uL13 family. Part of the 50S ribosomal subunit.

This protein is one of the early assembly proteins of the 50S ribosomal subunit, although it is not seen to bind rRNA by itself. It is important during the early stages of 50S assembly. The protein is Large ribosomal subunit protein uL13 of Bacillus mycoides (strain KBAB4) (Bacillus weihenstephanensis).